The following is a 358-amino-acid chain: Peptide chain release factor 1 (358 aa).

N5-methylglutamine is present on Gln233.

It belongs to the prokaryotic/mitochondrial release factor family. Post-translationally, methylated by PrmC. Methylation increases the termination efficiency of RF1.

Its subcellular location is the cytoplasm. Functionally, peptide chain release factor 1 directs the termination of translation in response to the peptide chain termination codons UAG and UAA. The protein is Peptide chain release factor 1 of Clostridium botulinum (strain ATCC 19397 / Type A).